The following is a 371-amino-acid chain: Antibiotic efflux pump periplasmic linker protein ArpA (371 aa).

Residues 1–22 (MQFKPAVTALVSAVALATLLSG) form the signal peptide. C23 is lipidated: N-palmitoyl cysteine. Residue C23 is the site of S-diacylglycerol cysteine attachment. Residues 115-155 (LAERYKQLIDEQAVSKQEYDDANAKRLQAEASLKSAQIDLR) adopt a coiled-coil conformation.

Belongs to the membrane fusion protein (MFP) (TC 8.A.1) family.

The protein resides in the cell inner membrane. The periplasmic linker protein component of an antibiotic efflux pump. Confers resistance to numerous structurally unrelated antibiotics such as carbenicillin, chloramphenicol, erythromycin, novobiocin, streptomycin and tetracycline. Is not involved in organic solvent efflux. This Pseudomonas putida (Arthrobacter siderocapsulatus) protein is Antibiotic efflux pump periplasmic linker protein ArpA (arpA).